We begin with the raw amino-acid sequence, 59 residues long: MGMRMMFTVFLLVVLATTVVPITLASATDGRNAAANARVSPVISKSSKKWCHPNPYTVG.

The N-terminal stretch at 1–25 (MGMRMMFTVFLLVVLATTVVPITLA) is a signal peptide. Positions 26–47 (SATDGRNAAANARVSPVISKSS) are excised as a propeptide.

It belongs to the conotoxin A superfamily. As to expression, expressed by the venom duct.

Its subcellular location is the secreted. Functionally, acts as a neurotoxin. The protein is Putative conotoxin of Conus imperialis (Imperial cone).